Reading from the N-terminus, the 253-residue chain is 5'-nucleotidase SurE (253 aa).

A divalent metal cation-binding residues include Asp8, Asp9, Ser39, and Asn92.

The protein belongs to the SurE nucleotidase family. A divalent metal cation serves as cofactor.

It is found in the cytoplasm. It catalyses the reaction a ribonucleoside 5'-phosphate + H2O = a ribonucleoside + phosphate. Functionally, nucleotidase that shows phosphatase activity on nucleoside 5'-monophosphates. The protein is 5'-nucleotidase SurE of Burkholderia thailandensis (strain ATCC 700388 / DSM 13276 / CCUG 48851 / CIP 106301 / E264).